Reading from the N-terminus, the 458-residue chain is NADH-ubiquinone oxidoreductase chain 4 (458 aa).

Transmembrane regions (helical) follow at residues 22-42 (FFWT…FIFT), 63-83 (MISA…ALAS), 96-116 (LLYI…FLST), 117-137 (NLMN…LIIF), 150-170 (IYLS…LLFL), 194-214 (ILWL…GFHL), 224-244 (TIAG…YGMI), 257-277 (LSLI…FICL), 284-306 (ALIA…TLSL), 311-333 (GAFI…ANSN), 350-370 (MLLP…LAMP), 391-413 (LTFP…MFML), and 434-454 (LTLF…NMII).

This sequence belongs to the complex I subunit 4 family.

It is found in the mitochondrion membrane. The catalysed reaction is a ubiquinone + NADH + 5 H(+)(in) = a ubiquinol + NAD(+) + 4 H(+)(out). Functionally, core subunit of the mitochondrial membrane respiratory chain NADH dehydrogenase (Complex I) that is believed to belong to the minimal assembly required for catalysis. Complex I functions in the transfer of electrons from NADH to the respiratory chain. The immediate electron acceptor for the enzyme is believed to be ubiquinone. The chain is NADH-ubiquinone oxidoreductase chain 4 (MT-ND4) from Myxine glutinosa (Atlantic hagfish).